The following is a 128-amino-acid chain: Prokineticin-2 (128 aa).

The first 27 residues, 1-27 (MRSSRCARLLLLLLLPPLLLTPPAGDA), serve as a signal peptide directing secretion. Cystine bridges form between C34–C46, C40–C58, C45–C106, C68–C114, and C108–C124. Positions 71–95 (MTRKNHFGNGRQERRKRKRRRKKKV) are disordered. Positions 83 to 95 (ERRKRKRRRKKKV) are enriched in basic residues.

The protein belongs to the AVIT (prokineticin) family.

It localises to the secreted. Functionally, may function as an output molecule from the suprachiasmatic nucleus (SCN) that transmits behavioral circadian rhythm. May also function locally within the SCN to synchronize output. Potently contracts gastrointestinal (GI) smooth muscle. The polypeptide is Prokineticin-2 (PROK2) (Bos taurus (Bovine)).